We begin with the raw amino-acid sequence, 203 residues long: Probable GTP-binding protein EngB (203 aa).

The EngB-type G domain occupies 22–195 (GIPEIALAGR…WEEIVNQYNQ (174 aa)). GTP contacts are provided by residues 30–37 (GRSNVGKS), 57–61 (GKTRT), 75–78 (DLPG), 142–145 (TKAD), and 174–176 (VSS). Mg(2+)-binding residues include Ser-37 and Thr-59.

Belongs to the TRAFAC class TrmE-Era-EngA-EngB-Septin-like GTPase superfamily. EngB GTPase family. Requires Mg(2+) as cofactor.

Its function is as follows. Necessary for normal cell division and for the maintenance of normal septation. The sequence is that of Probable GTP-binding protein EngB from Clostridioides difficile (strain 630) (Peptoclostridium difficile).